A 426-amino-acid chain; its full sequence is Proline--tRNA ligase (426 aa).

It belongs to the class-II aminoacyl-tRNA synthetase family. ProS type 2 subfamily. Homodimer.

It is found in the cytoplasm. The catalysed reaction is tRNA(Pro) + L-proline + ATP = L-prolyl-tRNA(Pro) + AMP + diphosphate. In terms of biological role, catalyzes the attachment of proline to tRNA(Pro) in a two-step reaction: proline is first activated by ATP to form Pro-AMP and then transferred to the acceptor end of tRNA(Pro). The protein is Proline--tRNA ligase of Rickettsia rickettsii (strain Iowa).